The following is a 668-amino-acid chain: BTB/POZ domain-containing protein At5g66560 (668 aa).

Residues 21–133 (SDIEIEVDDM…CYGVKMDLSA (113 aa)) form the BTB domain. Basic and acidic residues predominate over residues 73-84 (ETDKKGKGHEIE). Residues 73-98 (ETDKKGKGHEIEDDKEEEEVEEQEIE) are disordered. A compositionally biased stretch (acidic residues) spans 85–98 (DDKEEEEVEEQEIE). The NPH3 domain maps to 254–530 (ELWFEDLTQL…VQVLFFEQLQ (277 aa)). Tyr471 is modified (phosphotyrosine).

This sequence belongs to the NPH3 family.

Its pathway is protein modification; protein ubiquitination. May act as a substrate-specific adapter of an E3 ubiquitin-protein ligase complex (CUL3-RBX1-BTB) which mediates the ubiquitination and subsequent proteasomal degradation of target proteins. This is BTB/POZ domain-containing protein At5g66560 from Arabidopsis thaliana (Mouse-ear cress).